Here is a 312-residue protein sequence, read N- to C-terminus: tRNA uridine(34) hydroxylase (312 aa).

The region spanning 130 to 225 is the Rhodanese domain; that stretch reads RGDDVVFFDG…YGEKYGNDGL (96 aa). Cys-185 serves as the catalytic Cysteine persulfide intermediate.

Belongs to the TrhO family.

The enzyme catalyses uridine(34) in tRNA + AH2 + O2 = 5-hydroxyuridine(34) in tRNA + A + H2O. Functionally, catalyzes oxygen-dependent 5-hydroxyuridine (ho5U) modification at position 34 in tRNAs. This Corynebacterium diphtheriae (strain ATCC 700971 / NCTC 13129 / Biotype gravis) protein is tRNA uridine(34) hydroxylase.